A 210-amino-acid polypeptide reads, in one-letter code: MDEDGLPIVGSGIDLTKVPAIQQRRVVAYLNQFIVHTVRFLNRFSTVCEEKLASISLRIQQIETTLSILEAKLSSIPGLEDVRVEGVGQLPATEVNGPVTVVVPSQPETPIAVAVPLPPPEASPNIPDPRAAEAAGDGRMTVAKDPRYARYLKMVQVGVPVMAIKNKMVQEGLDPNLLDTPDAPVPDAVKKNTLDQDDDSDDGSESSFSD.

A coiled-coil region spans residues 49–73 (EEKLASISLRIQQIETTLSILEAKL). The disordered stretch occupies residues 173 to 210 (LDPNLLDTPDAPVPDAVKKNTLDQDDDSDDGSESSFSD). Residues 195 to 204 (DQDDDSDDGS) show a composition bias toward acidic residues.

It belongs to the CCDC53 family. Component of the WASH complex.

The protein is WASH complex subunit 3 of Salmo salar (Atlantic salmon).